A 62-amino-acid chain; its full sequence is U-stichotoxin-Hau1a (62 aa).

The N-terminal stretch at 1–21 (MKPAIFLMLFVAMFLISEGEG) is a signal peptide. A propeptide spanning residues 22-31 (FKPKDAPQER) is cleaved from the precursor. Proline 36 is modified (hydroxyproline). Disulfide bonds link cysteine 41–cysteine 53 and cysteine 44–cysteine 59.

This sequence belongs to the Hau1a/HC18/HC19 family.

It localises to the secreted. It is found in the nematocyst. Its function is as follows. Toxin that is lethal to crab. Does not produce the typical symptoms associated with sodium channel toxins in crabs, suggesting that it likely does not act on sodium channels. In Heteractis aurora (Banded sea anemone), this protein is U-stichotoxin-Hau1a.